The sequence spans 392 residues: uncharacterized protein (392 aa).

This sequence belongs to the mimivirus L17x/L18x family.

This is an uncharacterized protein from Acanthamoeba polyphaga (Amoeba).